A 341-amino-acid chain; its full sequence is Casein kinase I isoform alpha (341 aa).

Residues 16-284 enclose the Protein kinase domain; it reads YKLIRKIGSG…YLRQLFRILF (269 aa). ATP-binding positions include 22–30 and lysine 45; that span reads IGSGSFGDI. The Proton acceptor role is filled by aspartate 135. Residues 306–320 show a composition bias toward polar residues; the sequence is QSQSSGVPGTNTTTQ. The interval 306–341 is disordered; that stretch reads QSQSSGVPGTNTTTQGATVPSAGVPAGVAPGGTTPQ. A compositionally biased stretch (low complexity) spans 321-341; it reads GATVPSAGVPAGVAPGGTTPQ.

It belongs to the protein kinase superfamily. CK1 Ser/Thr protein kinase family. Casein kinase I subfamily.

The catalysed reaction is L-seryl-[protein] + ATP = O-phospho-L-seryl-[protein] + ADP + H(+). The enzyme catalyses L-threonyl-[protein] + ATP = O-phospho-L-threonyl-[protein] + ADP + H(+). The chain is Casein kinase I isoform alpha (kin-19) from Caenorhabditis elegans.